Consider the following 230-residue polypeptide: MASTMTPYFGIVVSLIAYGIGTLLFKHSKGFFLFTPLFVAMVLGIVFLKVGNFTFEEYNTGGKMISFFLEPATIAFAIPLYKQVDKLKKYWWQILSAIVVGSICSVVVVYIVAKAIGLDTAVMNSMLPQAATTAIALPISESIGGIPAITSFAVIFNAVIVYALGALFLKTFRVKHPIAKGLALGTAGHALGVAVGIEMGEVEAAMASIAVTVVGVVTVVVIPMFMPFIG.

Helical transmembrane passes span 5-25 (MTPYFGIVVSLIAYGIGTLLF), 30-50 (GFFLFTPLFVAMVLGIVFLKV), 61-81 (GGKMISFFLEPATIAFAIPLY), 92-112 (WQILSAIVVGSICSVVVVYIV), 126-146 (MLPQAATTAIALPISESIGGI), 149-169 (ITSFAVIFNAVIVYALGALFL), 177-197 (PIAKGLALGTAGHALGVAVGI), and 209-229 (IAVTVVGVVTVVVIPMFMPFI).

It belongs to the CidB/LrgB family. LrgB subfamily.

It is found in the cell membrane. Functionally, inhibits the expression or activity of extracellular murein hydrolases by interacting, possibly with LrgA, with the holin-like protein CidA. The LrgAB and CidA proteins may affect the proton motive force of the membrane. May be involved in programmed cell death (PCD), possibly triggering PCD in response to antibiotics and environmental stresses. The sequence is that of Antiholin-like protein LrgB from Bacillus mycoides (strain KBAB4) (Bacillus weihenstephanensis).